A 413-amino-acid chain; its full sequence is Serine hydroxymethyltransferase (413 aa).

Residues leucine 117 and 121–123 contribute to the (6S)-5,6,7,8-tetrahydrofolate site; that span reads GHL. An N6-(pyridoxal phosphate)lysine modification is found at lysine 226. Residue 349–351 participates in (6S)-5,6,7,8-tetrahydrofolate binding; it reads SPF.

The protein belongs to the SHMT family. In terms of assembly, homodimer. Pyridoxal 5'-phosphate is required as a cofactor.

It is found in the cytoplasm. It catalyses the reaction (6R)-5,10-methylene-5,6,7,8-tetrahydrofolate + glycine + H2O = (6S)-5,6,7,8-tetrahydrofolate + L-serine. Its pathway is one-carbon metabolism; tetrahydrofolate interconversion. It participates in amino-acid biosynthesis; glycine biosynthesis; glycine from L-serine: step 1/1. In terms of biological role, catalyzes the reversible interconversion of serine and glycine with tetrahydrofolate (THF) serving as the one-carbon carrier. This reaction serves as the major source of one-carbon groups required for the biosynthesis of purines, thymidylate, methionine, and other important biomolecules. Also exhibits THF-independent aldolase activity toward beta-hydroxyamino acids, producing glycine and aldehydes, via a retro-aldol mechanism. The chain is Serine hydroxymethyltransferase from Listeria welshimeri serovar 6b (strain ATCC 35897 / DSM 20650 / CCUG 15529 / CIP 8149 / NCTC 11857 / SLCC 5334 / V8).